Reading from the N-terminus, the 108-residue chain is Protein Asterix (108 aa).

Positions 1–29 (MNMTVDPRRKEKINRYKAPKNQGQSGGAN) are disordered. A helical membrane pass occupies residues 80-96 (VLSSFMLSVSAVVMSYL).

Belongs to the Asterix family.

The protein localises to the membrane. The polypeptide is Protein Asterix (Drosophila melanogaster (Fruit fly)).